Here is a 260-residue protein sequence, read N- to C-terminus: NH(3)-dependent NAD(+) synthetase (260 aa).

Residue 31 to 38 (GLSGGLDS) participates in ATP binding. Asp37 contributes to the Mg(2+) binding site. Arg112 is a deamido-NAD(+) binding site. Thr132 contributes to the ATP binding site. Glu137 is a binding site for Mg(2+). Lys161 and Ser183 together coordinate ATP.

The protein belongs to the NAD synthetase family. Homodimer.

It catalyses the reaction deamido-NAD(+) + NH4(+) + ATP = AMP + diphosphate + NAD(+) + H(+). Its pathway is cofactor biosynthesis; NAD(+) biosynthesis; NAD(+) from deamido-NAD(+) (ammonia route): step 1/1. In terms of biological role, catalyzes the ATP-dependent amidation of deamido-NAD to form NAD. Uses ammonia as a nitrogen source. The polypeptide is NH(3)-dependent NAD(+) synthetase (Helicobacter acinonychis (strain Sheeba)).